A 250-amino-acid chain; its full sequence is Lectin 1 (250 aa).

Asparagine 119 carries N-linked (GlcNAc...) asparagine; partial glycosylation. Glutamate 128 and aspartate 130 together coordinate Mn(2+). Residues aspartate 130, tyrosine 132, asparagine 138, and aspartate 141 each contribute to the Ca(2+) site. Positions 141 and 146 each coordinate Mn(2+).

This sequence belongs to the leguminous lectin family.

In terms of biological role, di-N-acetylchitobiose specific lectin. The protein is Lectin 1 of Laburnum alpinum (Scotch laburnum).